Reading from the N-terminus, the 182-residue chain is Large ribosomal subunit protein uL22 (182 aa).

Residues 155–182 (SGVDGAKQGKKKKKTDGVEKATTKRQKQ) are disordered.

It belongs to the universal ribosomal protein uL22 family.

This is Large ribosomal subunit protein uL22 (RpL17) from Carabus granulatus (Ground beetle).